The primary structure comprises 372 residues: Protein RecA (372 aa).

66–73 contacts ATP; the sequence is GPESSGKT. Positions 328–359 are disordered; sequence GVGVRPEEPTATESGPDAATAESAPAVPAPAT. Over residues 345-359 the composition is skewed to low complexity; it reads AATAESAPAVPAPAT.

Belongs to the RecA family.

It localises to the cytoplasm. Can catalyze the hydrolysis of ATP in the presence of single-stranded DNA, the ATP-dependent uptake of single-stranded DNA by duplex DNA, and the ATP-dependent hybridization of homologous single-stranded DNAs. It interacts with LexA causing its activation and leading to its autocatalytic cleavage. The sequence is that of Protein RecA from Streptomyces ambofaciens.